A 101-amino-acid chain; its full sequence is Large ribosomal subunit protein uL23 (101 aa).

It belongs to the universal ribosomal protein uL23 family. In terms of assembly, part of the 50S ribosomal subunit. Contacts protein L29, and trigger factor when it is bound to the ribosome.

Functionally, one of the early assembly proteins it binds 23S rRNA. One of the proteins that surrounds the polypeptide exit tunnel on the outside of the ribosome. Forms the main docking site for trigger factor binding to the ribosome. The chain is Large ribosomal subunit protein uL23 from Corynebacterium efficiens (strain DSM 44549 / YS-314 / AJ 12310 / JCM 11189 / NBRC 100395).